Here is a 727-residue protein sequence, read N- to C-terminus: Engulfment and cell motility protein 1 (727 aa).

Position 18 is a phosphotyrosine; by HCK (Y18). 2 positions are modified to N6-acetyllysine: K100 and K105. Phosphotyrosine; by HCK is present on Y216. An ELMO domain is found at 319–492; sequence AQRDIIFELR…VVKEQVMRAL (174 aa). A Phosphoserine modification is found at S344. Phosphotyrosine; by HCK occurs at positions 395 and 511. Positions 555-676 constitute a PH domain; it reads RLVEGTCFRK…DGLNALLGKD (122 aa). The SH3-binding signature appears at 707–714; sequence PDAPPPIP. Y720 is modified (phosphotyrosine; by HCK).

Interacts with ADGRB1. Interacts directly with the SH3-domain of DOCK1 via its SH3-binding site. Part of a complex with DOCK1 and RAC1. Part of a complex with DOCK1 and CRK isoform CRK-II. Interacts with PLEKHG6. Interacts with HCK (via SH3 domain). Interacts with ADGRB3. Interacts with DOCK5. Post-translationally, phosphorylated by HCK. In terms of tissue distribution, widely expressed, with a higher expression in the spleen and placenta.

It localises to the cytoplasm. The protein localises to the cell membrane. Involved in cytoskeletal rearrangements required for phagocytosis of apoptotic cells and cell motility. Acts in association with DOCK1 and CRK. Was initially proposed to be required in complex with DOCK1 to activate Rac Rho small GTPases. May enhance the guanine nucleotide exchange factor (GEF) activity of DOCK1. This is Engulfment and cell motility protein 1 (ELMO1) from Homo sapiens (Human).